Reading from the N-terminus, the 935-residue chain is Transcriptional regulatory protein LevR (935 aa).

The 232-residue stretch at A117–A348 folds into the Sigma-54 factor interaction domain. ATP-binding positions include G145–S152 and A215–E224. In terms of domain architecture, PRD 1 spans F468–K573. Position 503 is a phosphohistidine (H503). Residues R574–L711 form the PTS EIIA type-4 domain. H582 carries the post-translational modification Phosphohistidine; by HPr. A PRD 2 domain is found at L831–F935. H866 bears the Phosphohistidine mark.

It belongs to the transcriptional antiterminator BglG family. In terms of processing, possibly phosphorylated and inactivated by the PTS system.

Involved in positive regulation of the levanase operon which comprises the levDEFG genes for a fructose PTS system, and sacA for levanase. The chain is Transcriptional regulatory protein LevR (levR) from Bacillus subtilis (strain 168).